The chain runs to 187 residues: Interferon beta (187 aa).

An N-terminal signal peptide occupies residues 1–21; it reads MTSRSLLPFVLSLLLPRIIMA. Y24 carries the post-translational modification Phosphotyrosine. C53 and C162 are disulfide-bonded. Residues N76, N95, N132, and N158 are each glycosylated (N-linked (GlcNAc...) asparagine).

Belongs to the alpha/beta interferon family. Monomer.

The protein localises to the secreted. In terms of biological role, type I interferon cytokine that plays a key role in the innate immune response to infection, developing tumors and other inflammatory stimuli. Signals via binding to high-affinity (IFNAR2) and low-affinity (IFNAR1) heterodimeric receptor, activating the canonical Jak-STAT signaling pathway resulting in transcriptional activation or repression of interferon-regulated genes that encode the effectors of the interferon response, such as antiviral proteins, regulators of cell proliferation and differentiation, and immunoregulatory proteins. Signals mostly via binding to a IFNAR1-IFNAR2 heterodimeric receptor, but can also function with IFNAR1 alone and independently of Jak-STAT pathways. Elicits a wide variety of responses, including antiviral and antibacterial activities, and can regulate the development of B-cells, myelopoiesis and lipopolysaccharide (LPS)-inducible production of tumor necrosis factor. Plays a role in neuronal homeostasis by regulating dopamine turnover and protecting dopaminergic neurons: acts by promoting neuronal autophagy and alpha-synuclein clearance, thereby preventing dopaminergic neuron loss. IFNB1 is more potent than interferon-alpha (IFN-alpha) in inducing the apoptotic and antiproliferative pathways required for control of tumor cell growth. This is Interferon beta (IFNB1) from Tachyglossus aculeatus aculeatus (Southeast Australian short-beaked echidna).